The sequence spans 262 residues: Putative BTB/POZ domain-containing protein L834 (262 aa).

Positions 16-86 constitute a BTB domain; the sequence is FDVVVELTDE…FYKKNIQPCI (71 aa).

It belongs to the mimivirus BTB/WD family.

The chain is Putative BTB/POZ domain-containing protein L834 from Acanthamoeba polyphaga (Amoeba).